The primary structure comprises 318 residues: MGNGVQEGSVRLREDAEAVLAGAVSSKRDHRQVLSSLLSGALAGALAKTAVAPLDRTKIIFQVSSKRFSAKEAFRLLYFTYLNEGFLSLWRGNSATMVRVIPYAAIQFSAHEEYKRILGHYYGFRGEALPPWPRLLAGALAGTTAASLTYPLDLVRARMAVTPKEMYSNIFHVFIRISREEGLKTLYFGFTPTVLGVIPYAGLSFFTYESLKSLHREYSGRPQPYPFERMVFGACAGLIGQSASYPLDVVRRRMQTAGVTGHQHGSILSTLRSIVREEGAVRGLYKGLSMNWLKGPIAVGISFTTFDLMQILLRRLQS.

3 Solcar repeats span residues 31 to 117 (RQVL…YKRI), 129 to 214 (LPPW…LKSL), and 224 to 312 (PYPF…MQIL). Transmembrane regions (helical) follow at residues 33-53 (VLSS…AVAP), 89-109 (LWRG…IQFS), 135-155 (LLAG…LDLV), 186-206 (LYFG…LSFF), 230-250 (MVFG…LDVV), and 293-313 (LKGP…QILL).

This sequence belongs to the mitochondrial carrier (TC 2.A.29) family.

The protein resides in the mitochondrion inner membrane. The enzyme catalyses ADP(out) + CoA(in) = ADP(in) + CoA(out). The catalysed reaction is 3'-dephospho-CoA(in) + ADP(out) = 3'-dephospho-CoA(out) + ADP(in). It catalyses the reaction adenosine 3',5'-bisphosphate(in) + ADP(out) = adenosine 3',5'-bisphosphate(out) + ADP(in). It carries out the reaction AMP(in) + ADP(out) = AMP(out) + ADP(in). The enzyme catalyses dADP(in) + ADP(out) = dADP(out) + ADP(in). The catalysed reaction is ADP(in) + ATP(out) = ADP(out) + ATP(in). In terms of biological role, mitochondrial carrier mediating the transport of coenzyme A (CoA) in mitochondria in exchange for intramitochondrial (deoxy)adenine nucleotides and adenosine 3',5'-diphosphate. The chain is Mitochondrial coenzyme A transporter SLC25A42 (Slc25a42) from Mus musculus (Mouse).